The following is a 364-amino-acid chain: Palmitoyltransferase ZDHHC9 (364 aa).

Over 1-35 the chain is Cytoplasmic; the sequence is MSVMVVRKKVTRKWEKLPGRNTFCCDGRVMMARQK. The helical transmembrane segment at 36-56 threads the bilayer; sequence GIFYLTLFLILGTCTLFFAFE. Over 57 to 63 the chain is Lumenal; sequence CRYLAVQ. The helical transmembrane segment at 64 to 84 threads the bilayer; that stretch reads LSPAIPVFAAMLFLFSMATLL. Residues 85–183 are Cytoplasmic-facing; that stretch reads RTSFSDPGVI…NCVGKRNYRY (99 aa). The 51-residue stretch at 139-189 folds into the DHHC domain; sequence KYCYTCKIFRPPRASHCSICDNCVERFDHHCPWVGNCVGKRNYRYFYLFIL. The S-palmitoyl cysteine intermediate role is filled by C169. The helical transmembrane segment at 184–204 threads the bilayer; that stretch reads FYLFILSLSLLTIYVFAFNIV. The Lumenal segment spans residues 205–228; it reads YVALKSLKIGFLETLKETPGTVLE. A helical membrane pass occupies residues 229–249; that stretch reads VLICFFTLWSVVGLTGFHTFL. The Cytoplasmic segment spans residues 250-364; the sequence is VALNQTTNED…PPQEASEAEK (115 aa). Residues 303–364 form a disordered region; that stretch reads PLEESGSRPP…PPQEASEAEK (62 aa). A compositionally biased stretch (polar residues) spans 310–336; that stretch reads RPPSTQETSSSLLPQSPASTEHMNSNE. Positions 346-356 are enriched in pro residues; the sequence is EMPPPEPPEPP.

This sequence belongs to the DHHC palmitoyltransferase family. ERF2/ZDHHC9 subfamily. In terms of assembly, interacts with GOLGA7.

The protein resides in the endoplasmic reticulum membrane. Its subcellular location is the golgi apparatus membrane. The catalysed reaction is L-cysteinyl-[protein] + hexadecanoyl-CoA = S-hexadecanoyl-L-cysteinyl-[protein] + CoA. Functionally, palmitoyltransferase that catalyzes the addition of palmitate onto various protein substrates, such as ADRB2, GSDMD, HRAS, NRAS and CGAS. The ZDHHC9-GOLGA7 complex is a palmitoyltransferase specific for HRAS and NRAS. May have a palmitoyltransferase activity toward the beta-2 adrenergic receptor/ADRB2 and therefore regulate G protein-coupled receptor signaling. Acts as a regulator of innate immunity by catalyzing palmitoylation of CGAS, thereby promoting CGAS homodimerization and cyclic GMP-AMP synthase activity. Activates pyroptosis by catalyzing palmitoylation of gasdermin-D (GSDMD), thereby promoting membrane translocation and pore formation of GSDMD. The polypeptide is Palmitoyltransferase ZDHHC9 (Zdhhc9) (Mus musculus (Mouse)).